Here is a 132-residue protein sequence, read N- to C-terminus: Small integral membrane protein 33 (132 aa).

Residues 1–28 (MHQAGHYSWPSPAVNSSSEQEPQRQLPE) form a disordered region. N-linked (GlcNAc...) asparagine glycosylation is present at Asn-15. Residues 43 to 63 (PVVTVIVAVFVLLAVCIIVAV) form a helical membrane-spanning segment. The segment at 99-132 (PQDSPEEAPPGPLVPGSCPAPDGPRPSIDEVTCL) is disordered.

It localises to the membrane. The chain is Small integral membrane protein 33 from Homo sapiens (Human).